A 230-amino-acid polypeptide reads, in one-letter code: Fibrillarin-like rRNA/tRNA 2'-O-methyltransferase (230 aa).

S-adenosyl-L-methionine contacts are provided by residues 87–88, 105–106, 130–131, and 150–153; these read TT, EF, DA, and DVAQ.

This sequence belongs to the methyltransferase superfamily. Fibrillarin family. Interacts with nop5. Component of box C/D small ribonucleoprotein (sRNP) particles that contain rpl7ae, FlpA and nop5, plus a guide RNA.

Involved in pre-rRNA and tRNA processing. Utilizes the methyl donor S-adenosyl-L-methionine to catalyze the site-specific 2'-hydroxyl methylation of ribose moieties in rRNA and tRNA. Site specificity is provided by a guide RNA that base pairs with the substrate. Methylation occurs at a characteristic distance from the sequence involved in base pairing with the guide RNA. The polypeptide is Fibrillarin-like rRNA/tRNA 2'-O-methyltransferase (Methanococcus maripaludis (strain C6 / ATCC BAA-1332)).